The primary structure comprises 148 residues: U2 snRNP component IST3 (148 aa).

The region spanning 31 to 109 is the RRM domain; the sequence is AYIYIGNLNR…RALKIDHTFY (79 aa).

This sequence belongs to the IST3 family. In terms of assembly, component of the 45S U1.U2.U4/U6.U5 penta-snRNP particle, a subcomplex of the spliceosome. Belongs to the CWC complex (or CEF1-associated complex), a spliceosome sub-complex reminiscent of a late-stage spliceosome composed of the U2, U5 and U6 snRNAs and at least BUD13, BUD31, BRR2, CDC40, CEF1, CLF1, CUS1, CWC2, CWC15, CWC21, CWC22, CWC23, CWC24, CWC25, CWC27, ECM2, HSH155, IST3, ISY1, LEA1, MSL1, NTC20, PRP8, PRP9, PRP11, PRP19, PRP21, PRP22, PRP45, PRP46, SLU7, SMB1, SMD1, SMD2, SMD3, SMX2, SMX3, SNT309, SNU114, SPP2, SYF1, SYF2, RSE1 and YJU2. Belongs to the pre-mRNA retention and splicing (RES) complex composed of at least BUD13, IST3 and PML1. Subunit of the U2 snRNP. Interacts with RDS3.

It is found in the cytoplasm. Its subcellular location is the nucleus. In terms of biological role, required for pre-mRNA splicing and spliceosome assembly. As part of the pre-mRNA retention and splicing (RES) complex, required for nuclear pre-mRNA retention and efficient splicing. Required for MER1-activated splicing. This Saccharomyces cerevisiae (strain ATCC 204508 / S288c) (Baker's yeast) protein is U2 snRNP component IST3 (IST3).